The following is a 1828-amino-acid chain: MAASELYTKFARVWIPDPEEVWKSAELLKDYKPGDKVLLLHLEEGKDLEYRLDPKTSELPHLRNPDILVGENDLTALSYLHEPAVLHNLRVRFIDSKLIYTYCGIVLVAINPYEQLPIYGEDIINAYSGQNMGDMDPHIFAVAEEAYKQMARDERNQSIIVSGESGAGKTVSAKYAMRYFATVSGSASEANVEEKVLASNPIMESIGNAKTTRNDNSSRFGKYIEIGFDKRYRIIGANMRTYLLEKSRVVFQAEEERNYHIFYQLCASAKLPEFKMLRLGNADSFHYTKQGGSPMIEGVDDAKEMAHTRQACTLLGISESYQMGIFRILAGILHLGNVGFASRDSDSCTIPPKHEPLIIFCDLMGVDYEEMCHWLCHRKLATATETYIKPISKLQATNARDALAKHIYAKLFNWIVGHVNQALHSAVKQHSFIGVLDIYGFETFEINSFEQFCINYANEKLQQQFNMHVFKLEQEEYMKEQIPWTLIDFYDNQPCINLIESKLGILDLLDEECKMPKGTDDTWAQKLYNTHLNKCALFEKPRMSNKAFIIKHFADKVEYQCEGFLEKNKDTVFEEQIKVLKSSKFKMLPELFQDDEKAISPTSATSSGRTPLTRVPVKPTKGRPGQTAKEHKKTVGLQFRNSLHLLMETLNATTPHYVRCIKPNDFKFPFTFDEKRAVQQLRACGVLETIRISAAGFPSRWTYQEFFSRYRVLMKQKDVLGDRKQTCQNVLEKLILDKDKYQFGKTKIFFRAGQVAYLEKLRADKLRAACIRIQKTIRGWLLRKRYLCMQRAAITVQRYVRGYQARCYAKFLRRTKAATTIQKYWRMYVVRRKYKIRRAATIVLQSYLRGYLARNRYRKILREHKAVIIQKRVRGWLARTHYKRTMKAIIYLQCCFRRMMAKRELKKLKIEARSVERYKKLHIGMENKIMQLQRKVDEQNKDYKCLMEKLTNLEGVYNSETEKLRNDVERLQLSEEEAKVATGRVLSLQEEIAKLRKDLEQTRSEKKSIEERADKYKQETEQLVSNLKEENTLLKQEKETLNHLMVEQAKEMTETMERKLVEETKQLELDLNDERLRYQNLLNEFSRLEERYDDLKEEMTLMLNVPKPGHKRTDSTHSSNESEYTFSSEFAETEDIAPRTEEPTEKKVPLDMSLFLKLQKRVTELGQEKQLMQDELDRKEEQVLRSKAKGGERPQIRGAELGYESLKRQELESENKKLKNELNELRKALSEKSAPEVNAPGAPAYRVLMEQLTAVSEELDVRKEEVLILRSQLVSQKEAIQPKDDKNTMTDSTILLEDVQKMKDKGEIAQAYIGLKETNRLLESQLQSQKRSHENEAEALRGEIQSLKEENNRQQQLLAQNLQLPPEARIEASLQHEITRLTNENLDLMEQLEKQDKTVRKLKKQLKVFAKKIGELEVGQMENISPGQIIDEPIRPVNIPRKGKDFQGMLEYKREDEQKLVKNLILELKPRGVAVNLISGLPAYILFMCVRHADYLDDDQKVRSLLTSTINSIKKVLKKRGDDFETVSFWLSNTCRFLHCLKQYSGEEGFMKHNTSRQNEHCLTNFDLAEYRQVLSDLAIQIYQQLVRVLENILQPMIVSGMLEHETIQGVSGVKPTGLRKRTSSIADEGTYTLDSILRQLNSFHSVMCQHGMDPELIKQVVKQMFYIVGAITLNNLLLRKDMCSWSKGMQIRYNVSQLEEWLRDKNLMNSGAKETLEPLIQAAQLLQVKKKTDDDAEAICSMCNALTTAQIVKVLNLYTPVNEFEERVSVSFIRTIQVRLRDRKDSPQLLMDAKHIFPVTFPFNPSSLALETIQIPASLGLGFIARV.

A2 is subject to N-acetylalanine. Residues 8-60 form the Myosin N-terminal SH3-like domain; that stretch reads TKFARVWIPDPEEVWKSAELLKDYKPGDKVLLLHLEEGKDLEYRLDPKTSELP. Residues 69 to 763 form the Myosin motor domain; it reads VGENDLTALS…QVAYLEKLRA (695 aa). 163 to 170 contributes to the ATP binding site; sequence GESGAGKT. A disordered region spans residues 599-633; that stretch reads ISPTSATSSGRTPLTRVPVKPTKGRPGQTAKEHKK. S600 carries the post-translational modification Phosphoserine. Over residues 600–610 the composition is skewed to polar residues; that stretch reads SPTSATSSGRT. Residues 643–665 form an actin-binding region; sequence LHLLMETLNATTPHYVRCIKPND. 6 IQ domains span residues 766-788, 789-813, 814-836, 837-861, 862-884, and 885-914; these read LRAA…RYLC, MQRA…KFLR, RTKA…KYKI, RRAA…RKIL, REHK…HYKR, and TMKA…EARS. 2 coiled-coil regions span residues 914–1239 and 1314–1418; these read SVER…EVNA and GLKE…ELEV. The residue at position 1032 (T1032) is a Phosphothreonine. The interval 1105 to 1147 is disordered; sequence VPKPGHKRTDSTHSSNESEYTFSSEFAETEDIAPRTEEPTEKK. Positions 1116–1130 are enriched in polar residues; it reads THSSNESEYTFSSEF. Over residues 1136 to 1147 the composition is skewed to basic and acidic residues; that stretch reads IAPRTEEPTEKK. Phosphoserine is present on residues S1425 and S1625. The 277-residue stretch at 1507-1783 folds into the Dilute domain; it reads TSTINSIKKV…IRTIQVRLRD (277 aa). T1733 is subject to Phosphothreonine.

The protein belongs to the TRAFAC class myosin-kinesin ATPase superfamily. Myosin family. May be a homodimer, which associates with multiple calmodulin or myosin light chains. Interacts with RIPL2, the interaction is required for its role in dendrite formation. Interacts with MLPH. Interacts with SYTL4. Interacts with MYRIP. Interacts with RAB10; mediates the transport to the plasma membrane of SLC2A4/GLUT4 storage vesicles. Interacts with FMR1; this interaction occurs in association with polyribosome.

The enzyme catalyses ATP + H2O = ADP + phosphate + H(+). Its function is as follows. Processive actin-based motor that can move in large steps approximating the 36-nm pseudo-repeat of the actin filament. Can hydrolyze ATP in the presence of actin, which is essential for its function as a motor protein. Involved in melanosome transport. Also mediates the transport of vesicles to the plasma membrane. May also be required for some polarization process involved in dendrite formation. In Rattus norvegicus (Rat), this protein is Unconventional myosin-Va (Myo5a).